We begin with the raw amino-acid sequence, 193 residues long: Dephospho-CoA kinase (193 aa).

One can recognise a DPCK domain in the interval Ile-5–Ile-193. Ala-13–Thr-18 contacts ATP.

Belongs to the CoaE family.

Its subcellular location is the cytoplasm. It carries out the reaction 3'-dephospho-CoA + ATP = ADP + CoA + H(+). It participates in cofactor biosynthesis; coenzyme A biosynthesis; CoA from (R)-pantothenate: step 5/5. In terms of biological role, catalyzes the phosphorylation of the 3'-hydroxyl group of dephosphocoenzyme A to form coenzyme A. The protein is Dephospho-CoA kinase of Fusobacterium nucleatum subsp. nucleatum (strain ATCC 25586 / DSM 15643 / BCRC 10681 / CIP 101130 / JCM 8532 / KCTC 2640 / LMG 13131 / VPI 4355).